The following is a 191-amino-acid chain: Small ribosomal subunit protein uS7 (191 aa).

The disordered stretch occupies residues 56–80 (NKSGEQGDGDGESGGKAGGIKKRSL).

This sequence belongs to the universal ribosomal protein uS7 family. As to quaternary structure, part of the 30S ribosomal subunit. Contacts proteins S9 and S11.

One of the primary rRNA binding proteins, it binds directly to 16S rRNA where it nucleates assembly of the head domain of the 30S subunit. Is located at the subunit interface close to the decoding center, probably blocks exit of the E-site tRNA. The chain is Small ribosomal subunit protein uS7 from Coxiella burnetii (strain RSA 493 / Nine Mile phase I).